Reading from the N-terminus, the 189-residue chain is UPF0301 protein CTA_0231 (189 aa).

This sequence belongs to the UPF0301 (AlgH) family.

The sequence is that of UPF0301 protein CTA_0231 from Chlamydia trachomatis serovar A (strain ATCC VR-571B / DSM 19440 / HAR-13).